Reading from the N-terminus, the 168-residue chain is Protein C2-DOMAIN ABA-RELATED 1 (168 aa).

An N-acetylmethionine modification is found at M1. The 104-residue stretch at 1 to 104 (MENLVGLLRI…EAIKFAHQLG (104 aa)) folds into the C2 domain. Positions 21, 22, 27, 73, 74, 75, and 81 each coordinate Ca(2+).

Belongs to the plant CAR protein family. As to quaternary structure, dimers and oligomers. Binds to PYR/PYL/RCAR abscisic acid intracellular receptors in an ABA-independent manner, both at the plasma membrane and in the nucleus. Interacts directly with PYR1, PYL1, PYL4, PYL6 and PYL8. Binds phospholipids in a Ca(2+)-dependent manner. Ca(2+) is required as a cofactor. In terms of tissue distribution, expressed in roots.

It is found in the cell membrane. The protein localises to the nucleus. In terms of biological role, stimulates the GTPase/ATPase activities of Obg-like ATPases. Mediates the transient calcium-dependent interaction of PYR/PYL/RCAR abscisic acid (ABA) receptors with the plasma membrane and thus regulates ABA sensitivity. Binds liposomes in the absence of exogenous Ca(2+), but this activity is enhanced in the presence of Ca(2+) and generates membrane curvature. The protein is Protein C2-DOMAIN ABA-RELATED 1 of Arabidopsis thaliana (Mouse-ear cress).